The following is a 276-amino-acid chain: NH(3)-dependent NAD(+) synthetase (276 aa).

An ATP-binding site is contributed by 47–54 (GISGGQDS). A Mg(2+)-binding site is contributed by Asp-53. Deamido-NAD(+) is bound at residue Arg-141. An ATP-binding site is contributed by Thr-161. Glu-166 contacts Mg(2+). Deamido-NAD(+) is bound by residues Lys-174 and Asp-181. ATP-binding residues include Lys-190 and Thr-212. 261–262 (HK) provides a ligand contact to deamido-NAD(+).

It belongs to the NAD synthetase family. Homodimer.

It carries out the reaction deamido-NAD(+) + NH4(+) + ATP = AMP + diphosphate + NAD(+) + H(+). It functions in the pathway cofactor biosynthesis; NAD(+) biosynthesis; NAD(+) from deamido-NAD(+) (ammonia route): step 1/1. Its function is as follows. Catalyzes the ATP-dependent amidation of deamido-NAD to form NAD. Uses ammonia as a nitrogen source. The polypeptide is NH(3)-dependent NAD(+) synthetase (Levilactobacillus brevis (strain ATCC 367 / BCRC 12310 / CIP 105137 / JCM 1170 / LMG 11437 / NCIMB 947 / NCTC 947) (Lactobacillus brevis)).